Reading from the N-terminus, the 1013-residue chain is MGTGPLTSGVRAGGGNTGWLWMSSCNLGSPVLPISFLFWLLLAAPGARAAGYKTCPPTKPGMLNVHLLPHTHDDVGWLKTVDQYYYGILSDVQHASVQYILDSVVSSLLEKPTRRFIYVEMAFFSRWWKQQTSATQDAVRNLVRQGRLEFVNGGWVMNDEAATHYGAIVDQMTLGLRFLQDTFGSDGLPRVAWHIDPFGHSREQASLFAQMGFDGFFLGRIDYQDKLNRKKKLRMEELWRASDSLEPPAADLFTGVLPNNYNPPKYLCWDVLCTDPPVVDNPRSPEFNAKTLVNYFLKLASSQKGFYRTNHTVMTMGSDFHYENANMWFKNMDKLIRLVNAQQVNGSLVHVLYSTPTCYLWELNKANLTWTVKEDDFFPYADGPHMFWTGYFSSRPALKRYERLSYNFLQVCNQLEALVGPEANVGPYGSGDSAPLQEAMAVLQHHDAVSGTARQNVVNDYARQLAAGWGPCEVLVSNALARLSHYKQNFSFCRELNISICPVSQTSERFQVTLYNPLGRKVDQMVRLPVYEGNFIVKDPHDKNISSNVVMVPSYYSETYQWELLFPASVPALGFSTYSVAKMSDLNHQAHNLLSRPRKHKSHHVLVIENKYMRATFDSGTGLLMKIENLEQNLSLPVSQGFFWYNASVGDEESSQASGAYIFRPNVGKPIPVSRWAQISLVKTALVQEVHQNFSAWCSQVIRLYKGQRHLELEWTVGPIPVRDDWGKEVISRFDTPMKTKGQFFTDSNGREILKRRDDYRPTWTLNQTEPVAGNYYPVNTRIYITDGQMQLTVLTDRSQGGSSLQDGSLELMVHRRLLVDDDRGVSEPLLETDTGDKVRGRHLVLLSSVSDAAARHRLLAEQEVLAPQVVLSLGGSSPYHSRATPKTQFSGLRQELPPQVHLLTLARWGPKMLLLRLEHQFALKEDSDRNLSSPVTLNVQNLFQTFTINYLQETTLAANQPLSRASRLKWMTNTGPTSYPEPSKLDPTSVTLKPMEIRTFLASVQWQEHRPA.

The signal sequence occupies residues methionine 1 to alanine 49. 2 disulfide bridges follow: cysteine 55–cysteine 358 and cysteine 268–cysteine 273. Histidine 72, aspartate 74, and aspartate 196 together coordinate Zn(2+). The active-site Nucleophile is the aspartate 196. Residues asparagine 310, asparagine 345, and asparagine 367 are each glycosylated (N-linked (GlcNAc...) asparagine). Residues cysteine 412 and cysteine 472 are joined by a disulfide bond. Position 446 (histidine 446) interacts with Zn(2+). N-linked (GlcNAc...) asparagine glycans are attached at residues asparagine 489, asparagine 497, asparagine 544, asparagine 633, asparagine 646, asparagine 693, asparagine 767, and asparagine 931. Cysteine 493 and cysteine 501 form a disulfide bridge.

The protein belongs to the glycosyl hydrolase 38 family. It depends on Zn(2+) as a cofactor.

It localises to the lysosome. The catalysed reaction is Hydrolysis of terminal, non-reducing alpha-D-mannose residues in alpha-D-mannosides.. Functionally, necessary for the catabolism of N-linked carbohydrates released during glycoprotein turnover. The polypeptide is Lysosomal alpha-mannosidase (Man2b1) (Mus musculus (Mouse)).